Reading from the N-terminus, the 195-residue chain is Antigenic thaumatin-like protein ARB_01183 (195 aa).

The signal sequence occupies residues 1-22 (MHSNTAVIALSALAALVPAALA). Disulfide bonds link Cys-125/Cys-153 and Cys-130/Cys-137. Residues 171 to 195 (GPKKMFKPVQEKAANRPRHPHARPE) are disordered. The span at 185 to 195 (NRPRHPHARPE) shows a compositional bias: basic residues.

The protein belongs to the thaumatin family.

The protein resides in the secreted. Might be involved in the inhibition of growth of fungal competitors and pathogenicity. The polypeptide is Antigenic thaumatin-like protein ARB_01183 (Arthroderma benhamiae (strain ATCC MYA-4681 / CBS 112371) (Trichophyton mentagrophytes)).